Reading from the N-terminus, the 708-residue chain is Vertnin (708 aa).

2 disordered regions span residues 473–499 (PWKGEGGEGAGKATAGGPPAPHEFLPP) and 561–636 (APAL…PVAE). The segment covering 568-582 (GLREAKEKQEKEAGR) has biased composition (basic and acidic residues).

Belongs to the vertnin family.

The polypeptide is Vertnin (VRTN) (Ailuropoda melanoleuca (Giant panda)).